A 1030-amino-acid chain; its full sequence is Toll-like receptor 9 (1030 aa).

The signal sequence occupies residues 1–24 (MGPRCTLHPLSLLVQVTALAAALA). The Extracellular portion of the chain corresponds to 25–816 (QGRLPAFLPC…LCLDETLSWN (792 aa)). C34 and C44 form a disulfide bridge. 46–50 (WLFLK) provides a ligand contact to DNA. LRR repeat units follow at residues 61-84 (RANV…DFVH), 86-109 (SSLR…HFPC), 121-146 (VPTL…SLVS), 149-165 (LSRT…LTGL), 166-189 (HALR…ALEV), 197-220 (LGNL…LPPS), 222-241 (ETLL…DLAN), 242-267 (LTAL…CREC), 282-305 (LSRL…WFRG), 307-331 (DRLQ…AFQG), 332-355 (LARL…HLHL), 362-385 (LRSL…TLQP), 389-412 (LPML…IFGA), 414-439 (PGLL…TREV), 469-493 (CKAF…MFAR), 495-518 (SRLE…QFVP), 519-542 (LTSL…SFTE), 544-571 (PRLE…SFVA), 573-597 (LPAL…LCSA), 599-621 (LCAL…LYLR), 626-649 (LRSL…ALDN), 651-674 (PKSL…SLTL), 675-698 (LPKL…SLPS), 700-722 (TQLR…FFAL), 723-746 (AKQL…WFGS), and 748-771 (VGNL…TFVG). N63 carries an N-linked (GlcNAc...) asparagine glycan. Residues 71–76 (SNRIHH) and 94–108 (KWNC…MHFP) each bind DNA. C97 and C109 are oxidised to a cystine. An N-linked (GlcNAc...) asparagine glycan is attached at N128. DNA is bound by residues Y131, R151, and 178–180 (YYK). A disulfide bridge connects residues C177 and C183. N199 is a glycosylation site (N-linked (GlcNAc...) asparagine). Y207 contacts DNA. N209 and N241 each carry an N-linked (GlcNAc...) asparagine glycan. 2 disulfide bridges follow: C254–C267 and C257–C264. C257 carries the S-palmitoyl cysteine lipid modification. R261 serves as a coordination point for DNA. C264 carries S-palmitoyl cysteine lipidation. N339 is a glycosylation site (N-linked (GlcNAc...) asparagine). A disulfide bridge links C469 with C499. The N-linked (GlcNAc...) asparagine glycan is linked to N512. An N-linked (GlcNAc...) asparagine glycan is attached at N566. Residues N668 and N693 are each glycosylated (N-linked (GlcNAc...) asparagine). The N-linked (GlcNAc...) asparagine glycan is linked to N730. 2 disulfide bridges follow: C763–C789 and C765–C808. Residues 817-837 (CFGISLLAMALGLVVPMLHHL) form a helical membrane-spanning segment. The Cytoplasmic portion of the chain corresponds to 838-1030 (CGWDLWYCFH…NFCRGPTTAE (193 aa)). Positions 865–1010 (LFYDAFVVFD…SFWAQLGTAL (146 aa)) constitute a TIR domain.

It belongs to the Toll-like receptor family. Monomer and homodimer. Exists as a monomer in the absence of unmethylated cytidine-phosphate-guanosine (CpG) ligand. Proteolytic processing of an insertion loop (Z-loop) is required for homodimerization upon binding to the unmethylated CpG ligand leading to its activation. Interacts with MYD88 via their respective TIR domains. Interacts with BTK. Interacts (via transmembrane domain) with UNC93B1. Interacts with CD300LH; the interaction may promote full activation of TLR9-triggered innate responses. Interacts with CNPY3 and HSP90B1; this interaction is required for proper folding in the endoplasmic reticulum. Interacts with SMPDL3B. Interacts with CD82; this interaction is essential for TLR9-dependent myddosome formation in response to CpG stimulation. Post-translationally, activated by proteolytic cleavage of the flexible loop between repeats LRR14 and LRR15 within the ectodomain. Cleavage requires UNC93B1. Proteolytically processed by first removing the majority of the ectodomain by either asparagine endopeptidase (AEP) or a cathepsin followed by a trimming event that is solely cathepsin mediated and required for optimal receptor signaling. Palmitoylated by ZDHHC3 in the Golgi regulates TLR9 trafficking from the Golgi to endosomes. Depalmitoylation by PPT1 controls the release of TLR9 from UNC93B1 in endosomes.

The protein resides in the endoplasmic reticulum membrane. It is found in the endosome. It localises to the lysosome. The protein localises to the cytoplasmic vesicle. Its subcellular location is the phagosome. Key component of innate and adaptive immunity. TLRs (Toll-like receptors) control host immune response against pathogens through recognition of molecular patterns specific to microorganisms. TLR9 is a nucleotide-sensing TLR which is activated by unmethylated cytidine-phosphate-guanosine (CpG) dinucleotides. Acts via MYD88 and TRAF6, leading to NF-kappa-B activation, cytokine secretion and the inflammatory response. Upon CpG stimulation, induces B-cell proliferation, activation, survival and antibody production. The polypeptide is Toll-like receptor 9 (TLR9) (Sus scrofa (Pig)).